Here is a 281-residue protein sequence, read N- to C-terminus: 2,3,4,5-tetrahydropyridine-2,6-dicarboxylate N-succinyltransferase (281 aa).

The substrate site is built by Arg108 and Asp145.

This sequence belongs to the transferase hexapeptide repeat family. As to quaternary structure, homotrimer.

Its subcellular location is the cytoplasm. The enzyme catalyses (S)-2,3,4,5-tetrahydrodipicolinate + succinyl-CoA + H2O = (S)-2-succinylamino-6-oxoheptanedioate + CoA. It functions in the pathway amino-acid biosynthesis; L-lysine biosynthesis via DAP pathway; LL-2,6-diaminopimelate from (S)-tetrahydrodipicolinate (succinylase route): step 1/3. The chain is 2,3,4,5-tetrahydropyridine-2,6-dicarboxylate N-succinyltransferase from Methylobacterium nodulans (strain LMG 21967 / CNCM I-2342 / ORS 2060).